A 635-amino-acid polypeptide reads, in one-letter code: 1-deoxy-D-xylulose-5-phosphate synthase (635 aa).

Residues histidine 79 and 120-122 (GHS) contribute to the thiamine diphosphate site. Aspartate 151 contacts Mg(2+). Thiamine diphosphate is bound by residues 152 to 153 (GA), asparagine 182, tyrosine 291, and glutamate 372. Position 182 (asparagine 182) interacts with Mg(2+).

It belongs to the transketolase family. DXPS subfamily. In terms of assembly, homodimer. The cofactor is Mg(2+). Requires thiamine diphosphate as cofactor.

It catalyses the reaction D-glyceraldehyde 3-phosphate + pyruvate + H(+) = 1-deoxy-D-xylulose 5-phosphate + CO2. The protein operates within metabolic intermediate biosynthesis; 1-deoxy-D-xylulose 5-phosphate biosynthesis; 1-deoxy-D-xylulose 5-phosphate from D-glyceraldehyde 3-phosphate and pyruvate: step 1/1. In terms of biological role, catalyzes the acyloin condensation reaction between C atoms 2 and 3 of pyruvate and glyceraldehyde 3-phosphate to yield 1-deoxy-D-xylulose-5-phosphate (DXP). This chain is 1-deoxy-D-xylulose-5-phosphate synthase, found in Xylella fastidiosa (strain M12).